A 151-amino-acid polypeptide reads, in one-letter code: Ribosome maturation factor RimP (151 aa).

It belongs to the RimP family.

The protein resides in the cytoplasm. Its function is as follows. Required for maturation of 30S ribosomal subunits. The sequence is that of Ribosome maturation factor RimP from Haemophilus influenzae (strain PittGG).